The following is a 3184-amino-acid chain: Probable serine/threonine-protein kinase pats1 (3184 aa).

The span at 369 to 378 (DPPPPPPSNS) shows a compositional bias: pro residues. Disordered regions lie at residues 369–516 (DPPP…QIPP) and 913–1013 (SITR…TSIL). Residues 379-415 (SPPISKSTSNNNLNVSNYHNNNNNNNNSNSNLSNSGN) are compositionally biased toward low complexity. The segment covering 421-450 (DFQSQNLVKSYNRENSGNSLNSMLHQTSLP) has biased composition (polar residues). A compositionally biased stretch (low complexity) spans 451 to 512 (NNNNSNVVNN…NNNNSNNNNS (62 aa)). The region spanning 842-1348 (CFPDHSLLQE…FQDTMWNEYF (507 aa)) is the Myotubularin phosphatase domain. A compositionally biased stretch (polar residues) spans 913–934 (SITRATSPEDQNNGSSNYLLTP). Over residues 935–993 (NSPNSSSSNLANNNNSNNNNINNNNNNNNNNNNNNNNNSNNNNNNNNNNNNNNNNNNNN) the composition is skewed to low complexity. The span at 1000 to 1013 (SRSTTIDNGQTSIL) shows a compositional bias: polar residues. LRR repeat units lie at residues 1391–1412 (FLETLDLSNLRLYYLPSESTLY), 1416–1438 (GLRELNLSKNNLNSISCSLSSLV), 1439–1460 (KLEKLSFEENSITNLPIETVVL), 1467–1488 (SLTELNLSSNQLIDLPIEFSMF), 1491–1512 (SLKKLHLKNNRFSAIPEVLGML), 1514–1535 (NLIELDLSELDLSSSTNSGVGI), 1541–1563 (KLCILNLNQTRIVELPKEFGDLK), 1564–1585 (SLEKLYLDFNSLVTLPHSFRQL), 1587–1608 (NLEELSLSFNSMTELPREVCFL), 1610–1631 (NLKKLMIEGNQIQFLPNEISQL), 1633–1654 (KLMILNVCKNKLDSLPASIGQL), 1656–1678 (QLVSLNLNNNSQLVSLRPTMGLL), and 1680–1701 (NLVELKLDGTRLKTPPPEIVSL). In terms of domain architecture, Roc spans 1716 to 1910 (GQEQCYKMKL…EKLEALVQSQ (195 aa)). Residues 1716-1910 (GQEQCYKMKL…EKLEALVQSQ (195 aa)) form a small GTPase-like region. GTP is bound by residues 1729–1736 (GQENVGKT), 1797–1801 (DFAGQ), and 1854–1857 (THLD). Residues 1918–2127 (PRSYMLLENL…KCYWKNGMIL (210 aa)) enclose the COR domain. Residues 2247–2519 (LMIEELIGEG…RLIKIAEAMF (273 aa)) form the Protein kinase domain. ATP is bound by residues 2253 to 2261 (IGEGGAALV) and lysine 2274. The active-site Proton acceptor is the aspartate 2379. Disordered regions lie at residues 2528-2609 (YQQQ…TISH) and 2652-2671 (NSINNSNSNNEQPLSPNSLL). Low complexity predominate over residues 2529-2555 (QQQQQQQQQQQQSSPSKSSSTSPIIKS). Positions 2556–2576 (LNLSTVSELGESSNQTPKQNI) are enriched in polar residues. WD repeat units follow at residues 2745–2785 (PNQG…KYIQ), 2790–2829 (ANKDKKRIHCLYPYMNTVWCGSADDSITIWDIDTYQKIKS), 2909–2947 (AHERAIHAMIQVDDHVWTASSDGTIKVWSSTCQSVHTIE), 2949–2986 (AHSSRIFTLELVGDFVWSGSWDTTIKIWSTKDYHLVSE), and 2990–3040 (KHKD…NSRS). Residues 3055–3126 (GSSNSITNSN…NYYYSNNVNS (72 aa)) are compositionally biased toward low complexity. A disordered region spans residues 3055–3164 (GSSNSITNSN…TPPGSKGLMQ (110 aa)). The span at 3141 to 3157 (HEQTSPNSATPLSSTPP) shows a compositional bias: polar residues.

It belongs to the protein kinase superfamily. TKL Ser/Thr protein kinase family. ROCO subfamily.

It carries out the reaction L-seryl-[protein] + ATP = O-phospho-L-seryl-[protein] + ADP + H(+). It catalyses the reaction L-threonyl-[protein] + ATP = O-phospho-L-threonyl-[protein] + ADP + H(+). In terms of biological role, may act as a serine/threonine-protein kinase and guanine-nucleotide releasing factor. Essential regulator of cytokinesis involved in the binding to actomyosin cytoskeleton. This Dictyostelium discoideum (Social amoeba) protein is Probable serine/threonine-protein kinase pats1 (pats1).